The sequence spans 121 residues: Large ribosomal subunit protein uL14 (121 aa).

The protein belongs to the universal ribosomal protein uL14 family. In terms of assembly, part of the 50S ribosomal subunit. Forms a cluster with proteins L3 and L19. In the 70S ribosome, L14 and L19 interact and together make contacts with the 16S rRNA in bridges B5 and B8.

Its function is as follows. Binds to 23S rRNA. Forms part of two intersubunit bridges in the 70S ribosome. In Aquifex aeolicus (strain VF5), this protein is Large ribosomal subunit protein uL14.